The primary structure comprises 609 residues: Rhotekin-2 (609 aa).

One can recognise an REM-1 domain in the interval 5–81 (SLRGPALRLA…LQKLEEQIAN (77 aa)). Positions 56-91 (KNLMVCNARLMAYTSELQKLEEQIANQTGRCDVKFE) form a coiled coil. Positions 286-393 (EDAFAGFLNQ…WMEAFWQHFF (108 aa)) constitute a PH domain. Disordered stretches follow at residues 495–520 (HDEK…KSQS) and 554–609 (KPMA…QAQV). The segment covering 569-582 (RLSDGEHTDTKTNF) has biased composition (basic and acidic residues).

As to expression, expressed in lymphocytes, CD4 positive T-cells and bone marrow-derived cells. Also expressed in lung, colon, thymus and brain.

Functionally, may play an important role in lymphopoiesis. The polypeptide is Rhotekin-2 (RTKN2) (Homo sapiens (Human)).